A 61-amino-acid polypeptide reads, in one-letter code: Venom protein 22.1 (61 aa).

A signal peptide spans methionine 1–glycine 18.

The protein belongs to the non-disulfide-bridged peptide (NDBP) superfamily. Long chain multifunctional peptide (group 2) family. Expressed by the venom gland.

Its subcellular location is the secreted. In Lychas mucronatus (Chinese swimming scorpion), this protein is Venom protein 22.1.